Here is a 401-residue protein sequence, read N- to C-terminus: Ninja-family protein MODD (401 aa).

Disordered stretches follow at residues 95–135 (KQGV…GEGR) and 215–238 (TGNK…GLPP). The segment covering 105–130 (RPSGGAEAEPAAARLPASGSPSSGSS) has biased composition (low complexity). Residues 217–226 (NKKTGGNVNH) show a composition bias toward polar residues.

The protein belongs to the Ninja family. In terms of assembly, interacts with BZIP46, TPR3 and PUB70.

The protein localises to the nucleus. Functionally, acts as a negative regulator of abscisic acid (ABA) signaling and drought tolerance. Mediates deactivation and degradation of BZIP46, a positive regulator of ABA signaling and drought stress tolerance. Represses BZIP46 activity via interaction with the TPR3-HDAC1 corepressor complex and down-regulation of the histone acetylation level at BZIP46 target genes. Promotes BZIP46 degradation via interaction with the U-box type ubiquitin E3 ligase PUB70. The chain is Ninja-family protein MODD from Oryza sativa subsp. japonica (Rice).